We begin with the raw amino-acid sequence, 141 residues long: Putative 8-oxo-dGTP diphosphatase 2 (141 aa).

One can recognise a Nudix hydrolase domain in the interval 2 to 131 (LNQIVVAGAI…WIADLARTLN (130 aa)). Residues glycine 37, glutamate 52, glutamate 55, and glutamate 56 each contribute to the Mg(2+) site. A Nudix box motif is present at residues 37–58 (GKVAAGETERAALARELAEELG).

The protein belongs to the Nudix hydrolase family. Mg(2+) serves as cofactor. The cofactor is Mn(2+).

It catalyses the reaction 8-oxo-dGTP + H2O = 8-oxo-dGMP + diphosphate + H(+). In terms of biological role, may be involved in the GO system responsible for removing an oxidatively damaged form of guanine (7,8-dihydro-8-oxoguanine, 8-oxo-dGTP) from DNA and the nucleotide pool. 8-oxo-dGTP is inserted opposite dA and dC residues of template DNA with almost equal efficiency thus leading to A.T to G.C transversions. MutT specifically degrades 8-oxo-dGTP to the monophosphate. The sequence is that of Putative 8-oxo-dGTP diphosphatase 2 (mutT2) from Mycobacterium tuberculosis (strain CDC 1551 / Oshkosh).